The chain runs to 173 residues: Small ribosomal subunit protein uS5 (173 aa).

The 64-residue stretch at Trp17 to Val80 folds into the S5 DRBM domain.

Belongs to the universal ribosomal protein uS5 family. Part of the 30S ribosomal subunit. Contacts proteins S4 and S8.

In terms of biological role, with S4 and S12 plays an important role in translational accuracy. Functionally, located at the back of the 30S subunit body where it stabilizes the conformation of the head with respect to the body. This is Small ribosomal subunit protein uS5 from Picosynechococcus sp. (strain ATCC 27264 / PCC 7002 / PR-6) (Agmenellum quadruplicatum).